Here is a 273-residue protein sequence, read N- to C-terminus: Putative peptidyl-prolyl cis-trans isomerase Cbf2 (273 aa).

The signal sequence occupies residues 1 to 21; it reads MKKFSLVAAALIAGVALNVNA. Residues 131–228 form the PpiC domain; the sequence is PARVQAKHIL…FGYHVILKEN (98 aa).

The enzyme catalyses [protein]-peptidylproline (omega=180) = [protein]-peptidylproline (omega=0). This Campylobacter jejuni subsp. jejuni serotype O:23/36 (strain 81-176) protein is Putative peptidyl-prolyl cis-trans isomerase Cbf2 (cbf2).